Consider the following 886-residue polypeptide: Isoleucine--tRNA ligase (886 aa).

The 'HIGH' region motif lies at 60 to 70 (PYANGDIHIGH). E546 serves as a coordination point for L-isoleucyl-5'-AMP. The short motif at 587–591 (KMSKS) is the 'KMSKS' region element. ATP is bound at residue K590. Zn(2+) contacts are provided by C856, C859, C870, and C873.

It belongs to the class-I aminoacyl-tRNA synthetase family. IleS type 1 subfamily. In terms of assembly, monomer. Requires Zn(2+) as cofactor.

The protein localises to the cytoplasm. It carries out the reaction tRNA(Ile) + L-isoleucine + ATP = L-isoleucyl-tRNA(Ile) + AMP + diphosphate. Functionally, catalyzes the attachment of isoleucine to tRNA(Ile). As IleRS can inadvertently accommodate and process structurally similar amino acids such as valine, to avoid such errors it has two additional distinct tRNA(Ile)-dependent editing activities. One activity is designated as 'pretransfer' editing and involves the hydrolysis of activated Val-AMP. The other activity is designated 'posttransfer' editing and involves deacylation of mischarged Val-tRNA(Ile). In Mesomycoplasma hyopneumoniae (strain J / ATCC 25934 / NCTC 10110) (Mycoplasma hyopneumoniae), this protein is Isoleucine--tRNA ligase.